Consider the following 486-residue polypeptide: Cardiolipin synthase A (486 aa).

Helical transmembrane passes span 3 to 23 (TFYT…IAGV) and 38 to 58 (MAWL…YLSF). PLD phosphodiesterase domains are found at residues 219-246 (MDLR…VDPR) and 399-426 (EGGL…DMRS). Catalysis depends on residues H224, K226, D231, H404, K406, and D411.

Belongs to the phospholipase D family. Cardiolipin synthase subfamily. ClsA sub-subfamily.

The protein localises to the cell inner membrane. It catalyses the reaction 2 a 1,2-diacyl-sn-glycero-3-phospho-(1'-sn-glycerol) = a cardiolipin + glycerol. Its function is as follows. Catalyzes the reversible phosphatidyl group transfer from one phosphatidylglycerol molecule to another to form cardiolipin (CL) (diphosphatidylglycerol) and glycerol. The chain is Cardiolipin synthase A from Citrobacter koseri (strain ATCC BAA-895 / CDC 4225-83 / SGSC4696).